Here is a 21-residue protein sequence, read N- to C-terminus: Large ribosomal subunit protein uL30 (21 aa).

A compositionally biased stretch (polar residues) spans 1-15; the sequence is AKTENKTVTVRQTAS. The tract at residues 1-21 is disordered; that stretch reads AKTENKTVTVRQTASPIXXXK.

Belongs to the universal ribosomal protein uL30 family. Part of the 50S ribosomal subunit.

This Brevundimonas diminuta (Pseudomonas diminuta) protein is Large ribosomal subunit protein uL30 (rpmD).